A 210-amino-acid polypeptide reads, in one-letter code: MARALVLLSVVLVSLLVNQGRASDNQRLFNNAVIRVQHLHQLAAKMINDFEDSLLPEERRQLSKIFPLSFCNSDYIEAPTGKDETQKSSMLKLLRVSFRLIESWEFPSQTLSGTVSNSLTVGNPNQITEKLADLKMGISVLIQACLDGQPNMDDNDSLPLPFEEFYLTMGDNSLRESFRLLACFKKDMHKVETYLRVANCRRSLDSNCTL.

The signal sequence occupies residues 1–22; that stretch reads MARALVLLSVVLVSLLVNQGRA. Position 38 (His-38) interacts with Zn(2+). A disulfide bridge connects residues Cys-71 and Cys-183. Residue Glu-192 participates in Zn(2+) binding. Cys-200 and Cys-208 form a disulfide bridge.

This sequence belongs to the somatotropin/prolactin family.

The protein localises to the secreted. Growth hormone plays an important role in growth control and is involved in the regulation of several anabolic processes. Implicated as an osmoregulatory substance important for seawater adaptation. The protein is Somatotropin-1 (gh1) of Carassius auratus (Goldfish).